Here is a 59-residue protein sequence, read N- to C-terminus: Large ribosomal subunit protein bL32 (59 aa).

Belongs to the bacterial ribosomal protein bL32 family.

The sequence is that of Large ribosomal subunit protein bL32 from Thermodesulfovibrio yellowstonii (strain ATCC 51303 / DSM 11347 / YP87).